We begin with the raw amino-acid sequence, 574 residues long: Fusion glycoprotein F0 (574 aa).

Positions 1-25 are cleaved as a signal peptide; it reads MATTAMRMIISIIFISTYVTHITLC. The Extracellular segment spans residues 26-524; it reads QNITEEFYQS…SVDVGKSTTN (499 aa). N-linked (GlcNAc...) asparagine; by host glycans are attached at residues asparagine 27 and asparagine 70. Cystine bridges form between cysteine 37-cysteine 439, cysteine 69-cysteine 212, cysteine 313-cysteine 343, cysteine 322-cysteine 333, cysteine 358-cysteine 367, cysteine 382-cysteine 393, and cysteine 416-cysteine 422. The stretch at 76 to 96 forms a coiled coil; the sequence is VKLIKQELERYNNAVVELQSL. Asparagine 120 is a glycosylation site (N-linked (GlcNAc...) asparagine; by host). Residues 137 to 157 are fusion peptide; sequence FLGFLLGIGSAIASGVAVSKV. A coiled-coil region spans residues 158–209; the sequence is LHLEGEVNKIKNALLSTNKAVVSLSNGVSVLTSKVLDLKNYIDKELLPKVNN. Residues 481 to 516 are a coiled coil; sequence LVFPSDEFDASIAQVNAKINQSLAFIRRSDELLHSV. An N-linked (GlcNAc...) asparagine; by host glycan is attached at asparagine 500. The helical transmembrane segment at 525–550 threads the bilayer; the sequence is VVITTIIIVIVVVILMLIAVGLLFYS. The Cytoplasmic segment spans residues 551–574; sequence KTRSTPIMLGKDQLSGINNLSFSK.

It belongs to the paramyxoviruses fusion glycoprotein family. Homotrimer. Heterodimer with fusion protein F2; disulfide-linked. Part of a complex composed of F1, F2 and G glycoproteins. As a heterodimer with F2, interacts with host RHOA; this interaction facilitates virus-induced syncytium formation. As to quaternary structure, homotrimer. Heterodimer with fusion protein F1; disulfide-linked. Part of a complex composed of F1, F2 and G glycoproteins. As a heterodimer with F1, interacts with host RHOA; this interaction facilitates virus-induced syncytium formation. The F glycoprotein is synthesized as a F0 inactive precursor that is heavily N-glycosylated and processed at two sites by a host furin-like protease probably in the Golgi. The cleavage site between p27 and F1 may occur after endocytosis to yield the mature F1 and F2 proteins. Both cleavages are required for membrane fusion and p27 is released from the processed protein.

The protein localises to the host Golgi apparatus membrane. The protein resides in the virion membrane. It localises to the host cell membrane. In terms of biological role, inactive precursor that is cleaved at two sites by a furin-like protease to give rise to the mature F1 and F2 fusion glycoproteins. Class I viral fusion protein. Under the current model, the protein has at least 3 conformational states: pre-fusion native state, pre-hairpin intermediate state, and post-fusion hairpin state. During viral and plasma cell membrane fusion, the coiled coil regions assume a trimer-of-hairpins structure, positioning the fusion peptide in close proximity to the C-terminal region of the ectodomain. The formation of this structure appears to drive apposition and subsequent fusion of viral and cellular membranes leading to delivery of the nucleocapsid into the cytoplasm. This fusion is pH independent and occurs at the plasma or endosomal membrane. The trimer of F1-F2 (F protein) also facilitates the attachment and entry into the host cell. Later in infection, F protein expressed at the plasma membrane of infected cells can mediate fusion with adjacent cells to form syncytia, a cytopathic effect that could lead to tissue necrosis. Functionally, major determinant of the species specificity of RSV infection. The trimer of F1-F2 (F protein) also facilitates the attachment and entry into the host cell. Later in infection, F protein expressed at the plasma membrane of infected cells can mediate fusion with adjacent cells to form syncytia, a cytopathic effect that could lead to tissue necrosis. This Bos taurus (Bovine) protein is Fusion glycoprotein F0 (F).